The sequence spans 266 residues: 4-hydroxy-tetrahydrodipicolinate reductase (266 aa).

NAD(+) is bound at residue 10 to 15 (GPRGRM). Lysine 38 serves as a coordination point for NADP(+). NAD(+) contacts are provided by residues 99–101 (GTT) and 125–128 (APNF). The active-site Proton donor/acceptor is histidine 155. Histidine 156 is a binding site for (S)-2,3,4,5-tetrahydrodipicolinate. The active-site Proton donor is the lysine 159. 165 to 166 (GT) is a (S)-2,3,4,5-tetrahydrodipicolinate binding site.

The protein belongs to the DapB family.

Its subcellular location is the cytoplasm. It catalyses the reaction (S)-2,3,4,5-tetrahydrodipicolinate + NAD(+) + H2O = (2S,4S)-4-hydroxy-2,3,4,5-tetrahydrodipicolinate + NADH + H(+). It carries out the reaction (S)-2,3,4,5-tetrahydrodipicolinate + NADP(+) + H2O = (2S,4S)-4-hydroxy-2,3,4,5-tetrahydrodipicolinate + NADPH + H(+). Its pathway is amino-acid biosynthesis; L-lysine biosynthesis via DAP pathway; (S)-tetrahydrodipicolinate from L-aspartate: step 4/4. In terms of biological role, catalyzes the conversion of 4-hydroxy-tetrahydrodipicolinate (HTPA) to tetrahydrodipicolinate. This chain is 4-hydroxy-tetrahydrodipicolinate reductase, found in Bacillus mycoides (strain KBAB4) (Bacillus weihenstephanensis).